The chain runs to 316 residues: Beta-ketoacyl-[acyl-carrier-protein] synthase III 1 (316 aa).

Residues C112 and H243 contribute to the active site. The segment at 244–248 (QANYR) is ACP-binding. N273 is a catalytic residue.

This sequence belongs to the thiolase-like superfamily. FabH family. Homodimer.

It is found in the cytoplasm. It catalyses the reaction malonyl-[ACP] + acetyl-CoA + H(+) = 3-oxobutanoyl-[ACP] + CO2 + CoA. It functions in the pathway lipid metabolism; fatty acid biosynthesis. In terms of biological role, catalyzes the condensation reaction of fatty acid synthesis by the addition to an acyl acceptor of two carbons from malonyl-ACP. Catalyzes the first condensation reaction which initiates fatty acid synthesis and may therefore play a role in governing the total rate of fatty acid production. Possesses both acetoacetyl-ACP synthase and acetyl transacylase activities. Its substrate specificity determines the biosynthesis of branched-chain and/or straight-chain of fatty acids. The protein is Beta-ketoacyl-[acyl-carrier-protein] synthase III 1 of Vibrio parahaemolyticus serotype O3:K6 (strain RIMD 2210633).